Here is a 3268-residue protein sequence, read N- to C-terminus: MVLFTRCEKARKEKLAAGYKPLVDYLIDCDTPTFLERIEAIQEWDRSRDDLYVWIPILDRMDGLLLKVAEKYKYKQDPKKECEVKLVEMEAHDVDYCLKMLKFTRRLLLNTENRFVYSSGDVLMYLLNCPNFTIKLAVMRILAILGERFVIAREKIVAHNIFGDHNLRKKTLKLALSLSSSVMDEDGEHFSLVDLYFDKKKVPQKWRKLRFTHYTSNDFKKSSQQKNNINETQTSIKKVTMTTQELCEHSLQQIFDKGMALLPAESWFDFSIKASVAKAFSDDSGENIDLRNIIIETKLNAIAFVNTIFSPPQVSSKLFELDPYAFNSLTDLISLSETKIPKELRTDALFTLECISLKHVWCSDIIRNLGGNISHGLLFQILRYIAKTLREATDEIDEEYNVRFFYLISNLADVKPLHESLFAAGLIPTLLEIVSIRNCPYKRTLASATHLLETFIDNSETTTEFIENDGFTMLITSVANEIDFTLAHPETWQPPKYSVVYYSISFRELAYIRSLLKLVLKLLSTDSGDRIRNLIDSPILVSLKKILENKLVFGLTLITYTLDVVQKVINSEPTIYPVLVEAGLIPYVIDNFPKLIGPSAELLSLLPDVVSAICLNPEGLKQVKEKGLINNLFDFLLDADHARILTGGDRSTEYGTDIDELARHYPDLKANIVEALCNVIRKMPSTFRNEREFLFTSPKDQKYFFHRKNEEILTDKEEHEPAYWELLDKGTMLDTFTSVLFGMSLGNGSFSQVPQHLEARDFLAIIFMENPPYEYFTSVAISNVTEVLQYLDEKYEDYAFMDVMKVLNDQLENLNDFLNSPNDRSFFLERDGENSVRSCHSKLCRLAAILNIVTNVYIDLTTLSCKRIMQIYSYFDKRGFSLIKNLKLLFQKCALEEMYIRQHMPDSVITETMPLPIVDVSGDGPPLQIYIDDPKKGDQKGKITSVKTRNTLQMRTILYTLQSNTAILFRCFLRLSHSRNMDLEHKDLTTEVHIFENVVENVIEMLKATELEGHLPYILVLLNFNTFVFTIPKASPNSTEILQTIPAYIFYQKGGYLLYLHIIRDLFTRMTKIKDLSSLDNINYIDESNGILTLSCLINALTFYNKSMQTETMENVQSIGKYYVSIDDDYNIMKALTVPIKVMALAMILDLDKSDSLFKTQSRNVPYSVFKQLLSMLKNIFTNVNIYTKELYELHWDLIFPPIKKISLFEQVGIPGDVAANYLTDTGDDLPADNSIGLFSPEQWEKYKKLIGEDKSIYYPQPMQAQYYKGCSSKELDELRDTFFNDGLPSRIFTVLPFYPKLVNAFAKTLLQIFTKYDEPTEVFAGRILDRILETDLDDPATLSSLIHLFGIFLNEKYIYQKASHLMQRFIEYLEKSLKPEHVNTPWFSKALYVYEIILAKSELPHLEELSKDVLLRYPLLSMAKVFRIPDPMKQKLFDILIRVSDISNFYSALATSRILIFYSRDELYANNIARSGILSRLLKVIGSFQKLDKINFLESSFLLLTRRCFETTENVDALIRAEINRSFTARPLGGGDDAVRELTTILEEKAHVVMRSPSQFIDVLCETARFHEFDDQGALVDYSLKRFLGEKDKNTQASSTEKSDIYERTGIMHLLLSQLMAASEKDWLSEPANSSDLPENKKAQLDPSRNPVCAYMIFLLKLLVELVSSYNQCKFEFLTFSRRNTYAERPRPRTTAINFFLYRLLDKPVGTDHDKHEAKRREVIGMLARSVIIGFLATVQDDRTTKTDVKLADPHMNFIRKFAIEAIIKAIRNATSSSKLLESNHLKLDMWFRIITSMVYVQAPYLRQLLDSNKVEADQYQLCKLVIDLGLPSVITEAMASIDLNYPFSKKIFNVAVEALNTISSTRNNFSEHFKIEDHDEVEDEVDESDKEEIPDMFKNSALGMYDVEDIEEDDDDDTSLIGDDDAMAFVDSDNGFEVVFSDEDDDMGEEDADDARSDSEENELSSEMQSSTADGTDVDYEVDDADGLIINIDQPSGDDEEMADYDANISHSSHSENEDDASMDVIEVYDDELSSGYDVDLSDYDVDESDWDSGLSSLSISDEDSESSEDEPINSTRMGDSRRRWLIAEGVELTDDSQGESEEDDRGVFRGIEHIFSNENEPLFRVHDEMRHRNHHRSINRTHFHSAMSAPSLSLLNRGRRNQSNLINPLGPTGLEQVENDISDQVTVAGSGSRPRSHHLHFSEVLVSGSFFDEPVLDGIILKSTVSRWKDIFDMFYDSKTYANCIIPTVINRLYKVSLALQKDLENKREQEKLKNKNLLFNEAKVESHNSSDAISVEQDDIQESNVTHDDHEPVYVTIQGSEVDIGGTDIDPEFMNALPDDIRADVFAQHVRERRAEARLNSDHNVHSREIDSDFLEAIPEDIREGILDTEAEEQRMFGRIGSSADVIRADDDVSNNDEEVENGLDHGNSNDRNNADPEKKKPARIYFAPLIDRAGIASLMKSVFISKPYIQREIYHELFYRLCSSKQNRNDLMNTFLFILSEGIIDQHSLEKVYNIISSRAMGHAKTTTVRQLPSDCTPLTVANQTIEILQSLIDADSRLKYFLIAEHDNLIVNKANNKSRKEALPDKKLRWPLWHLFSLLDRKLITDESVLMDLLTRILQVCTKTLAVLSTSSNGKENLSKKFHLPSFDEDDLMKILSIIMLDSCTTRVFQQTLNIIYNLSKLQGCMSIFTKHLVSLAISIMSKLKSALDGLSREVGTITTGMEINSELLQKFTLPSSDQAKLLKILTTVDFLYTHKRKEEERNVKDLQSLYDKMNGGPVWSSLSECLSQFEKSQAINTSATILLPLIESLMVVCRRSDLSQNRNTAVKYEDAKLLDFSKTRVENLFFPFTDAHKKLLNQMIRSNPKLMSGPFALLVKNPKVLDFDNKRYFFNAKLKSDNQERPKLPITVRREQVFLDSYRALFFKTNDEIKNSKLEITFKGESGVDAGGVTREWYQVLSRQMFNPDYALFLPVPSDKTTFHPNRTSGINPEHLSFFKFIGMIIGKAIRDQCFLDCHFSREVYKNILGRPVSLKDMESLDPDYYKSLVWILENDITDIIEETFSVETDDYGEHKVINLIEGGKDIIVTEANKQDYVKKVVEYKLQTSVKEQMDNFLVGFYALISKDLITIFDEQELELLISGLPDIDVDDWKNNTTYVNYTATCKEVSYFWRAVRSFDAEERAKLLQFVTGTSKVPLNGFKELSGVNGVCKFSIHRDFGSSERLPSSHTCFNQLNLPPYESYETLRGSLLLAINEGHEGFGLA.

A Phosphoserine modification is found at Ser1890. 2 disordered regions span residues 1941–2023 (VFSD…EDDA) and 2038–2083 (GYDV…MGDS). The segment covering 1942-1955 (FSDEDDDMGEEDAD) has biased composition (acidic residues). Positions 1967–1976 (SSEMQSSTAD) are enriched in polar residues. 3 stretches are compositionally biased toward acidic residues: residues 1978-1988 (TDVDYEVDDAD), 2042-2053 (DLSDYDVDESDW), and 2063-2074 (SDEDSESSEDEP). Position 2096 is a phosphothreonine (Thr2096). Phosphoserine is present on residues Ser2119, Ser2376, Ser2406, and Ser2418. Residues 2416-2426 (DVSNNDEEVEN) are compositionally biased toward acidic residues. Residues 2416–2443 (DVSNNDEEVENGLDHGNSNDRNNADPEK) form a disordered region. The HECT domain occupies 2932–3268 (TNDEIKNSKL…NEGHEGFGLA (337 aa)). The active-site Glycyl thioester intermediate is the Cys3235.

This sequence belongs to the UPL family. TOM1/PTR1 subfamily. As to quaternary structure, interacts with the ADA3/NGG1 subunit of the SAGA complex. Interacts with KRR1.

The protein localises to the nucleus. It is found in the nucleolus. The catalysed reaction is S-ubiquitinyl-[E2 ubiquitin-conjugating enzyme]-L-cysteine + [acceptor protein]-L-lysine = [E2 ubiquitin-conjugating enzyme]-L-cysteine + N(6)-ubiquitinyl-[acceptor protein]-L-lysine.. The protein operates within protein modification; protein ubiquitination. Its function is as follows. Probable ubiquitin ligase protein involved in many cellular processes, such as transcription regulation, maintenance of nuclear structure, cell cycle, mRNA export and rRNA maturation. E3 ubiquitin ligase proteins mediate ubiquitination and subsequent proteasomal degradation of target proteins. Involved in transcription regulation by interacting, and probably mediating, ubiquitination of some subunit of the SAGA complex. Required for SPT7 ubiquitination. Participates in mRNA export from the nucleus by regulating the transport of hnRNP proteins. Required for the shuttling of hnRNP protein NAB2, probably by mediating ubiquitination of a protein associated with NAB2. Also required for full induction of the general stress and heat-shock responses. Involved in 18S rRNA maturation by affecting several early steps in the rRNA processing pathway. The chain is E3 ubiquitin-protein ligase TOM1 (TOM1) from Saccharomyces cerevisiae (strain ATCC 204508 / S288c) (Baker's yeast).